A 908-amino-acid chain; its full sequence is Probable disease resistance RPP8-like protein 4 (908 aa).

A coiled-coil region spans residues 15-57; that stretch reads DLLSRESERLQGIDEQLDGLKRQLRSLQSLLKDADAKKHGSDR. Residues 146-459 form the NB-ARC domain; sequence RQRVQREIRQ…AEGIYDGSTI (314 aa). 192 to 199 is an ATP binding site; the sequence is GMGGIGKT. LRR repeat units follow at residues 575–599, 600–623, and 842–867; these read LTLLRVLDLSRVKFEGGKLPSSIGG, LIHLRYLSLYGAVVSHLPSTMRNL, and MPCLRTLTIHDCEKLKELPDGLKYIT.

The protein belongs to the disease resistance NB-LRR family. RPP8/HRT subfamily.

Functionally, potential disease resistance protein. The protein is Probable disease resistance RPP8-like protein 4 (RPP8L4) of Arabidopsis thaliana (Mouse-ear cress).